The following is a 265-amino-acid chain: Undecaprenyl-diphosphatase (265 aa).

7 helical membrane-spanning segments follow: residues 41 to 61 (IAYTFGLFMEMGSIGSALIYF), 75 to 95 (LKFLVVVTALTGIVGVPLYVI), 104 to 124 (YNPSIPMIFLGIALIADGIYI), 137 to 157 (LSTKEMILIGIAQGIAALPGV), 180 to 200 (YSYLAYIPAAIGSVGTTLLFT), 215 to 235 (GIALAVISALLTGLVVIGFLL), and 244 to 264 (YLIDFMLGGIAVLVSMLGLII).

Belongs to the UppP family.

It is found in the cell membrane. It catalyses the reaction di-trans,octa-cis-undecaprenyl diphosphate + H2O = di-trans,octa-cis-undecaprenyl phosphate + phosphate + H(+). Functionally, catalyzes the dephosphorylation of undecaprenyl diphosphate (UPP). This Saccharolobus islandicus (strain Y.N.15.51 / Yellowstone #2) (Sulfolobus islandicus) protein is Undecaprenyl-diphosphatase.